A 34-amino-acid chain; its full sequence is Conotoxin S4.3 (34 aa).

Q1 bears the Pyrrolidone carboxylic acid mark. A 4-carboxyglutamate modification is found at E3. An O-linked (HexNAc...) serine glycan is attached at S7. T9 carries an O-linked (HexNAc...) threonine glycan. 4-hydroxyproline is present on residues P17, P22, P31, and P32.

The protein belongs to the conotoxin A superfamily. Contains 3 disulfide bonds. In terms of tissue distribution, expressed by the venom duct.

The protein localises to the secreted. Its function is as follows. Probable neurotoxin with ion channel inhibitor activity. In Conus striatus (Striated cone), this protein is Conotoxin S4.3.